The following is a 519-amino-acid chain: Aspartokinase (519 aa).

A Phosphoserine modification is found at serine 326. Threonine 328 carries the post-translational modification Phosphothreonine. Residues 436 to 518 (LVGKHMRNTT…MLVEKPWLYS (83 aa)) form the ACT domain.

The protein belongs to the aspartokinase family.

The catalysed reaction is L-aspartate + ATP = 4-phospho-L-aspartate + ADP. The protein operates within amino-acid biosynthesis; L-methionine biosynthesis via de novo pathway; L-homoserine from L-aspartate: step 1/3. It functions in the pathway amino-acid biosynthesis; L-threonine biosynthesis; L-threonine from L-aspartate: step 1/5. Phosphorylates aspartate, the first step in the biosynthesis of amino acids that derive from aspartate (the aspartate family of amino acids), including methioinine and threonine, the latter of which is a precursor to isoleucine. This Schizosaccharomyces pombe (strain 972 / ATCC 24843) (Fission yeast) protein is Aspartokinase.